Consider the following 386-residue polypeptide: Galactokinase (386 aa).

Residue 35-38 coordinates substrate; the sequence is EHTD. ATP-binding positions include Ser-69 and 125 to 131; that span reads GAGLSSS. Ser-131 and Glu-163 together coordinate Mg(2+). Asp-175 functions as the Proton acceptor in the catalytic mechanism. Tyr-224 contacts substrate.

The protein belongs to the GHMP kinase family. GalK subfamily.

The protein resides in the cytoplasm. The catalysed reaction is alpha-D-galactose + ATP = alpha-D-galactose 1-phosphate + ADP + H(+). Its pathway is carbohydrate metabolism; galactose metabolism. Its function is as follows. Catalyzes the transfer of the gamma-phosphate of ATP to D-galactose to form alpha-D-galactose-1-phosphate (Gal-1-P). The chain is Galactokinase from Vibrio vulnificus (strain CMCP6).